Here is a 158-residue protein sequence, read N- to C-terminus: Transcriptional repressor NrdR (158 aa).

A zinc finger lies at 3–34 (CPFCGNADTQVVDSRVSEEGDTIRRRRRCLSC). Positions 49 to 139 (PSVVKRNGSR…VYKNFEDIGE (91 aa)) constitute an ATP-cone domain.

The protein belongs to the NrdR family. The cofactor is Zn(2+).

Functionally, negatively regulates transcription of bacterial ribonucleotide reductase nrd genes and operons by binding to NrdR-boxes. The sequence is that of Transcriptional repressor NrdR from Bordetella petrii (strain ATCC BAA-461 / DSM 12804 / CCUG 43448).